We begin with the raw amino-acid sequence, 621 residues long: UvrABC system protein C (621 aa).

Positions 20–106 constitute a GIY-YIG domain; sequence TQSGIYQFFD…IKSLKPKYNI (87 aa). In terms of domain architecture, UVR spans 212–247; it reads KALLKILESKMHTLSHNLQFEEAAIMRDRIQKITQM.

The protein belongs to the UvrC family. As to quaternary structure, interacts with UvrB in an incision complex.

Its subcellular location is the cytoplasm. Functionally, the UvrABC repair system catalyzes the recognition and processing of DNA lesions. UvrC both incises the 5' and 3' sides of the lesion. The N-terminal half is responsible for the 3' incision and the C-terminal half is responsible for the 5' incision. This Helicobacter hepaticus (strain ATCC 51449 / 3B1) protein is UvrABC system protein C.